The following is a 339-amino-acid chain: D-erythrose-4-phosphate dehydrogenase (339 aa).

NAD(+)-binding positions include R12–I13 and R81. Substrate-binding positions include S154 to T156, R200, T213 to K214, and R236. Catalysis depends on C155, which acts as the Nucleophile. N318 contributes to the NAD(+) binding site.

It belongs to the glyceraldehyde-3-phosphate dehydrogenase family. Epd subfamily. In terms of assembly, homotetramer.

The protein localises to the cytoplasm. It catalyses the reaction D-erythrose 4-phosphate + NAD(+) + H2O = 4-phospho-D-erythronate + NADH + 2 H(+). It functions in the pathway cofactor biosynthesis; pyridoxine 5'-phosphate biosynthesis; pyridoxine 5'-phosphate from D-erythrose 4-phosphate: step 1/5. Its function is as follows. Catalyzes the NAD-dependent conversion of D-erythrose 4-phosphate to 4-phosphoerythronate. This is D-erythrose-4-phosphate dehydrogenase from Escherichia coli O45:K1 (strain S88 / ExPEC).